We begin with the raw amino-acid sequence, 568 residues long: TWiK family of potassium channels protein 9 (568 aa).

The Cytoplasmic portion of the chain corresponds to 1 to 15; sequence MKCSFHIPEKYQWAS. A helical membrane pass occupies residues 16-36; sequence TLFVHVALIAGVAVYTVFGAL. The segment at residues 163–183 is an intramembrane region (pore-forming); it reads IGNSVIFAFTVITTIGYGHVA. The helical transmembrane segment at 191 to 211 threads the bilayer; that stretch reads LFLIFYGVIGVPFTLLTIADL. Over 212–316 the chain is Cytoplasmic; that stretch reads GMFLTRFLKN…NNEPRKTEES (105 aa). Disordered regions lie at residues 243 to 262 and 274 to 314; these read QRNK…RSEV and MRTA…RKTE. The span at 297–307 shows a compositional bias: acidic residues; the sequence is GKEEDEEEPEN. The helical transmembrane segment at 317–337 threads the bilayer; sequence IALGITFTCYLVAGAKILSVY. The pore-forming intramembrane region spans 343–363; the sequence is FFKALYFNFVTLTTIGLGDFV. Residues 370–390 traverse the membrane as a helical segment; sequence LLITLIYIGIGLALTTMAIEI. Residues 391-568 lie on the Cytoplasmic side of the membrane; the sequence is AADLLKKLHY…LRTYTNARRK (178 aa).

This sequence belongs to the two pore domain potassium channel (TC 1.A.1.8) family. Expressed in ray A-type neurons and cell bodies. Also seen in head, pharyngeal and phasmid neurons, and in coelomocytes.

The protein localises to the membrane. Its function is as follows. Potassium channel protein that may be component of regulatory network that controls ray development and function. The polypeptide is TWiK family of potassium channels protein 9 (twk-9) (Caenorhabditis elegans).